The following is a 182-amino-acid chain: Oligoribonuclease (182 aa).

The 164-residue stretch at 8 to 171 (LIWIDLEMTG…DDIRESIKEL (164 aa)) folds into the Exonuclease domain. Residue Tyr129 is part of the active site.

It belongs to the oligoribonuclease family.

It is found in the cytoplasm. In terms of biological role, 3'-to-5' exoribonuclease specific for small oligoribonucleotides. This chain is Oligoribonuclease, found in Haemophilus influenzae (strain PittGG).